The primary structure comprises 299 residues: MTIELKNEYLTVQFKTLGGQLTSIKDKDGLEYLWQADPEYWNGQAPILFPICGSLRNDWAIYRPQERPFFTGLIRRHGFVRKEEFTLEEVNENSVTFSIKPNAEMLDNYLYQFELRVVYTLNGKSIRTEFQVTNLETEKTMPYFIGAHPAFNCPLVEGEKYEDYSLEFSEVESCSIPKSFPETGLLDLQDRTPFLENQKSLDLDYSLFSHDAITLDRLKSRSVTLRSRKSGKGLRVDFDDFPNLILWSTTNKSPFIALEPWSGLSTSLEEGNILEDKPQVTKVLPLDTSKKSYDITILN.

The protein is Protein LacX, plasmid (lacX) of Lactococcus lactis subsp. lactis (Streptococcus lactis).